The primary structure comprises 619 residues: ATP-dependent DNA helicase RecQ (619 aa).

The Helicase ATP-binding domain maps to 37 to 205; the sequence is INAALNGQDA…LRHLNLKNLH (169 aa). Position 50 to 57 (50 to 57) interacts with ATP; it reads MATGNGKS. Residues 149–152 carry the DEAH box motif; sequence DEAH. A Helicase C-terminal domain is found at 229 to 374; it reads QLTRFVLAQK…QIEQHKLEAI (146 aa). Zn(2+) contacts are provided by cysteine 383, cysteine 400, cysteine 403, and cysteine 406. An HRDC domain is found at 535–615; that stretch reads ANYDKDLFAR…QEHKAILANA (81 aa).

The protein belongs to the helicase family. RecQ subfamily. It depends on Mg(2+) as a cofactor. Zn(2+) is required as a cofactor.

It catalyses the reaction Couples ATP hydrolysis with the unwinding of duplex DNA by translocating in the 3'-5' direction.. The enzyme catalyses ATP + H2O = ADP + phosphate + H(+). In terms of biological role, an ATP-dependent DNA helicase which unwinds DNA in a 3'-5' direction. Plays a role in recombination. The sequence is that of ATP-dependent DNA helicase RecQ from Haemophilus influenzae (strain ATCC 51907 / DSM 11121 / KW20 / Rd).